Consider the following 643-residue polypeptide: Threonine--tRNA ligase 1 (643 aa).

Residues 3-64 (DMVKITFPDG…NEDGTVEIIT (62 aa)) enclose the TGS domain. Residues 245–542 (DHRKLGKELK…LIEEHKGALP (298 aa)) form a catalytic region. Cysteine 338, histidine 389, and histidine 519 together coordinate Zn(2+).

Belongs to the class-II aminoacyl-tRNA synthetase family. As to quaternary structure, homodimer. The cofactor is Zn(2+).

The protein resides in the cytoplasm. The enzyme catalyses tRNA(Thr) + L-threonine + ATP = L-threonyl-tRNA(Thr) + AMP + diphosphate + H(+). Functionally, catalyzes the attachment of threonine to tRNA(Thr) in a two-step reaction: L-threonine is first activated by ATP to form Thr-AMP and then transferred to the acceptor end of tRNA(Thr). Also edits incorrectly charged L-seryl-tRNA(Thr). This chain is Threonine--tRNA ligase 1 (thrS), found in Bacillus subtilis (strain 168).